The following is a 120-amino-acid chain: MAWYHQHRWHLDYSIPRQNLQAFLTTITFIDPQFKIQENGLTEGEYKTQIVKQIIPQLCRIPNQNSPPPIWVQGPRIKGDPTWLKINAKFITELIPKQKGTKNISTKTYLSRLFVIWLQN.

The protein resides in the host mitochondrion. Induces alteration of mitochondrial function that results in apoptosis contributing to tumor regression. This Walleye dermal sarcoma virus (WDSV) protein is Protein ORF-C (orfC).